The following is a 514-amino-acid chain: Beta-secretase 2 (514 aa).

Positions 1-19 (MGALLRALLLLVLAQWLLS) are cleaved as a signal peptide. Positions 20-62 (AVPALAPAPFTLPLQVAGATNHRASAVPGLGTPELPRADGLAL) are excised as a propeptide. Over 20–469 (AVPALAPAPF…NEPILWIVSY (450 aa)) the chain is Extracellular. Positions 88–425 (YYLEMLIGTP…DRAQRRVGFA (338 aa)) constitute a Peptidase A1 domain. Residue aspartate 106 is part of the active site. Asparagine 166 carries an N-linked (GlcNAc...) asparagine glycan. Disulfide bonds link cysteine 229–cysteine 429, cysteine 288–cysteine 453, and cysteine 340–cysteine 389. Residue aspartate 299 is part of the active site. The N-linked (GlcNAc...) asparagine glycan is linked to asparagine 362. A helical membrane pass occupies residues 470 to 490 (ALMSVCGAILLVLILLLLLPL). Over 491-514 (HCRHAPRDPEVVNDESSLVRHRWK) the chain is Cytoplasmic.

It belongs to the peptidase A1 family. Monomer. Interacts with RTN3 and RTN4. Post-translationally, undergoes autoproteolytic cleavage. Glycosylated. In terms of tissue distribution, high expression in pancreatic islets. Expressed at much lower levels in the pituitary, colon, and ovaries and is nearly absent from all the other tissues.

It localises to the cell membrane. The protein resides in the golgi apparatus. It is found in the endoplasmic reticulum. The protein localises to the endosome. Its subcellular location is the melanosome. It catalyses the reaction Broad endopeptidase specificity. Cleaves Glu-Val-Asn-Leu-|-Asp-Ala-Glu-Phe in the Swedish variant of Alzheimer's amyloid precursor protein.. In terms of biological role, responsible for the proteolytic processing of the amyloid precursor protein (APP). Cleaves APP, between residues 690 and 691, leading to the generation and extracellular release of beta-cleaved soluble APP, and a corresponding cell-associated C-terminal fragment which is later released by gamma-secretase. It has also been shown that it can cleave APP between residues 671 and 672. Involved in the proteolytic shedding of PMEL at early stages of melanosome biogenesis. Cleaves PMEL within the M-beta fragment to release the amyloidogenic PMEL luminal fragment containing M-alpha and a small portion of M-beta N-terminus. This is a prerequisite step for subsequent processing and assembly of PMEL fibrils into amyloid sheets. Responsible also for the proteolytic processing of CLTRN in pancreatic beta cells. In Mus musculus (Mouse), this protein is Beta-secretase 2 (Bace2).